The chain runs to 290 residues: MAAGKEIRTKIKSVENTRKITKAMEMVAASKMRKAQDRMKAARPYAEKIARVATHLAYAHPEYKHPFVIARDDVKRVGLIIVTSDKGLCGGLNTNAFRVVVNQMKQWEAAGVGIDVTAIGNKGLGFMQRLGANVVSQLTGVGDTPHMDKLIGPVKIMLDAYLEGRIDALYLVYNRFINTMKQEPTLTQLLPLAKMESTEEASLKTHWDYIYEPDAKPVVDAMLMRYIESLVYQGVAENIASEQSARMVAMKAASDNAKNVIGELKLVYNKTRQAAITKELSEIVAGAAAV.

The protein belongs to the ATPase gamma chain family. F-type ATPases have 2 components, CF(1) - the catalytic core - and CF(0) - the membrane proton channel. CF(1) has five subunits: alpha(3), beta(3), gamma(1), delta(1), epsilon(1). CF(0) has three main subunits: a, b and c.

The protein localises to the cell inner membrane. Produces ATP from ADP in the presence of a proton gradient across the membrane. The gamma chain is believed to be important in regulating ATPase activity and the flow of protons through the CF(0) complex. This chain is ATP synthase gamma chain, found in Thiobacillus denitrificans (strain ATCC 25259 / T1).